The primary structure comprises 83 residues: Small ribosomal subunit protein bS16 (83 aa).

It belongs to the bacterial ribosomal protein bS16 family.

The protein is Small ribosomal subunit protein bS16 of Pseudomonas aeruginosa (strain LESB58).